We begin with the raw amino-acid sequence, 456 residues long: Bifunctional protein GlmU (456 aa).

Positions 1-229 (MLNSAMSVVI…LSEVEGVNNR (229 aa)) are pyrophosphorylase. UDP-N-acetyl-alpha-D-glucosamine-binding positions include 11–14 (LAAG), lysine 25, glutamine 76, 81–82 (GT), 103–105 (YGD), glycine 140, glutamate 154, asparagine 169, and asparagine 227. Aspartate 105 provides a ligand contact to Mg(2+). Residue asparagine 227 participates in Mg(2+) binding. The segment at 230 to 250 (LQLSALERIYQREQADKLLLA) is linker. The interval 251–456 (GVMLLDPARF…SGWQRPVKKK (206 aa)) is N-acetyltransferase. Positions 333 and 351 each coordinate UDP-N-acetyl-alpha-D-glucosamine. The Proton acceptor role is filled by histidine 363. Residues tyrosine 366 and asparagine 377 each contribute to the UDP-N-acetyl-alpha-D-glucosamine site. Residues alanine 380, 386–387 (NY), serine 405, alanine 423, and arginine 440 contribute to the acetyl-CoA site.

It in the N-terminal section; belongs to the N-acetylglucosamine-1-phosphate uridyltransferase family. In the C-terminal section; belongs to the transferase hexapeptide repeat family. Homotrimer. It depends on Mg(2+) as a cofactor.

The protein localises to the cytoplasm. It catalyses the reaction alpha-D-glucosamine 1-phosphate + acetyl-CoA = N-acetyl-alpha-D-glucosamine 1-phosphate + CoA + H(+). The catalysed reaction is N-acetyl-alpha-D-glucosamine 1-phosphate + UTP + H(+) = UDP-N-acetyl-alpha-D-glucosamine + diphosphate. The protein operates within nucleotide-sugar biosynthesis; UDP-N-acetyl-alpha-D-glucosamine biosynthesis; N-acetyl-alpha-D-glucosamine 1-phosphate from alpha-D-glucosamine 6-phosphate (route II): step 2/2. It functions in the pathway nucleotide-sugar biosynthesis; UDP-N-acetyl-alpha-D-glucosamine biosynthesis; UDP-N-acetyl-alpha-D-glucosamine from N-acetyl-alpha-D-glucosamine 1-phosphate: step 1/1. It participates in bacterial outer membrane biogenesis; LPS lipid A biosynthesis. Its function is as follows. Catalyzes the last two sequential reactions in the de novo biosynthetic pathway for UDP-N-acetylglucosamine (UDP-GlcNAc). The C-terminal domain catalyzes the transfer of acetyl group from acetyl coenzyme A to glucosamine-1-phosphate (GlcN-1-P) to produce N-acetylglucosamine-1-phosphate (GlcNAc-1-P), which is converted into UDP-GlcNAc by the transfer of uridine 5-monophosphate (from uridine 5-triphosphate), a reaction catalyzed by the N-terminal domain. The polypeptide is Bifunctional protein GlmU (Pectobacterium atrosepticum (strain SCRI 1043 / ATCC BAA-672) (Erwinia carotovora subsp. atroseptica)).